A 336-amino-acid chain; its full sequence is MLKEALEVVTAKRDLDYGQVKNLLDSILEGELDEMKFGAFLAALKTKGETKEEISAFVDAFYEKAQKIEYTHPKTIDTCGTGGDGKGTFNISTASAIVLSCFDLKVAKHGNRSITSNSGSADILENLGIDIQAPPQRILEGLEKHNFAFLFAPKYHPATKKVATVRKSLGIRTVFNILGPLLNPVSLNYQVVGAFDFEAQEKIASVLKGKRKRAAIIHSLDGLDEISVSQKTRVLELQGDNIKEYYIDPKEYGIEYTLDDIKGYTPQENAKIFRSILNGEVSAYYWAVVLNSAFALYIAEVANDIEEGIALCQSAIKKGDAMLKLKDLQQHYKVGA.

5-phospho-alpha-D-ribose 1-diphosphate contacts are provided by residues Gly-80, 83–84, Thr-88, 90–93, 108–116, and Ser-120; these read GD, NIST, and KHGNRSITS. Gly-80 serves as a coordination point for anthranilate. Residue Ser-92 participates in Mg(2+) binding. Residue Asn-111 coordinates anthranilate. Residue Arg-166 participates in anthranilate binding. 2 residues coordinate Mg(2+): Asp-224 and Glu-225.

The protein belongs to the anthranilate phosphoribosyltransferase family. As to quaternary structure, homodimer. Mg(2+) serves as cofactor.

The enzyme catalyses N-(5-phospho-beta-D-ribosyl)anthranilate + diphosphate = 5-phospho-alpha-D-ribose 1-diphosphate + anthranilate. The protein operates within amino-acid biosynthesis; L-tryptophan biosynthesis; L-tryptophan from chorismate: step 2/5. In terms of biological role, catalyzes the transfer of the phosphoribosyl group of 5-phosphorylribose-1-pyrophosphate (PRPP) to anthranilate to yield N-(5'-phosphoribosyl)-anthranilate (PRA). This chain is Anthranilate phosphoribosyltransferase, found in Caldicellulosiruptor saccharolyticus (strain ATCC 43494 / DSM 8903 / Tp8T 6331).